The primary structure comprises 189 residues: ATP synthase subunit delta (189 aa).

This sequence belongs to the ATPase delta chain family. As to quaternary structure, F-type ATPases have 2 components, F(1) - the catalytic core - and F(0) - the membrane proton channel. F(1) has five subunits: alpha(3), beta(3), gamma(1), delta(1), epsilon(1). F(0) has three main subunits: a(1), b(2) and c(10-14). The alpha and beta chains form an alternating ring which encloses part of the gamma chain. F(1) is attached to F(0) by a central stalk formed by the gamma and epsilon chains, while a peripheral stalk is formed by the delta and b chains.

Its subcellular location is the cell inner membrane. F(1)F(0) ATP synthase produces ATP from ADP in the presence of a proton or sodium gradient. F-type ATPases consist of two structural domains, F(1) containing the extramembraneous catalytic core and F(0) containing the membrane proton channel, linked together by a central stalk and a peripheral stalk. During catalysis, ATP synthesis in the catalytic domain of F(1) is coupled via a rotary mechanism of the central stalk subunits to proton translocation. In terms of biological role, this protein is part of the stalk that links CF(0) to CF(1). It either transmits conformational changes from CF(0) to CF(1) or is implicated in proton conduction. This chain is ATP synthase subunit delta, found in Ehrlichia ruminantium (strain Gardel).